A 315-amino-acid polypeptide reads, in one-letter code: Transaldolase (315 aa).

The active-site Schiff-base intermediate with substrate is Lys125.

The protein belongs to the transaldolase family. Type 1 subfamily. As to quaternary structure, homodimer.

The protein localises to the cytoplasm. The enzyme catalyses D-sedoheptulose 7-phosphate + D-glyceraldehyde 3-phosphate = D-erythrose 4-phosphate + beta-D-fructose 6-phosphate. It participates in carbohydrate degradation; pentose phosphate pathway; D-glyceraldehyde 3-phosphate and beta-D-fructose 6-phosphate from D-ribose 5-phosphate and D-xylulose 5-phosphate (non-oxidative stage): step 2/3. In terms of biological role, transaldolase is important for the balance of metabolites in the pentose-phosphate pathway. The protein is Transaldolase of Polaromonas sp. (strain JS666 / ATCC BAA-500).